The chain runs to 143 residues: Interleukin-3 (143 aa).

Residues 1 to 19 (MSRLPVLLLLHLLVSPGLQ) form the signal peptide. Cysteines 35 and 103 form a disulfide. N-linked (GlcNAc...) asparagine glycosylation occurs at Asn-89.

This sequence belongs to the IL-3 family. In terms of assembly, monomer. Activated T-cells, mast cells, natural killer cells.

It localises to the secreted. Granulocyte/macrophage colony-stimulating factors are cytokines that act in hematopoiesis by controlling the production, differentiation, and function of 2 related white cell populations of the blood, the granulocytes and the monocytes-macrophages. Functionally, this CSF induces granulocytes, macrophages, mast cells, stem cells, erythroid cells, eosinophils and megakaryocytes. The chain is Interleukin-3 (IL3) from Macaca mulatta (Rhesus macaque).